A 519-amino-acid polypeptide reads, in one-letter code: 2,3-bisphosphoglycerate-independent phosphoglycerate mutase (519 aa).

D9 and S60 together coordinate Mn(2+). S60 functions as the Phosphoserine intermediate in the catalytic mechanism. A compositionally biased stretch (basic and acidic residues) spans 76 to 91; that stretch reads DSARVSDSIARSRGEA. The disordered stretch occupies residues 76–102; the sequence is DSARVSDSIARSRGEAPPDDDAQDPPF. Substrate contacts are provided by residues H134, 163–164, R195, R201, 267–270, and K341; these read RD and RSDR. Mn(2+)-binding residues include D408, H412, D449, H450, and H466.

Belongs to the BPG-independent phosphoglycerate mutase family. Requires Mn(2+) as cofactor.

The catalysed reaction is (2R)-2-phosphoglycerate = (2R)-3-phosphoglycerate. It functions in the pathway carbohydrate degradation; glycolysis; pyruvate from D-glyceraldehyde 3-phosphate: step 3/5. Its function is as follows. Catalyzes the interconversion of 2-phosphoglycerate and 3-phosphoglycerate. The protein is 2,3-bisphosphoglycerate-independent phosphoglycerate mutase of Haloarcula marismortui (strain ATCC 43049 / DSM 3752 / JCM 8966 / VKM B-1809) (Halobacterium marismortui).